A 213-amino-acid chain; its full sequence is Uridine kinase (213 aa).

15-22 (GASASGKS) contributes to the ATP binding site.

The protein belongs to the uridine kinase family.

It is found in the cytoplasm. It carries out the reaction uridine + ATP = UMP + ADP + H(+). The catalysed reaction is cytidine + ATP = CMP + ADP + H(+). The protein operates within pyrimidine metabolism; CTP biosynthesis via salvage pathway; CTP from cytidine: step 1/3. Its pathway is pyrimidine metabolism; UMP biosynthesis via salvage pathway; UMP from uridine: step 1/1. The protein is Uridine kinase of Erwinia tasmaniensis (strain DSM 17950 / CFBP 7177 / CIP 109463 / NCPPB 4357 / Et1/99).